Reading from the N-terminus, the 285-residue chain is 2,3,4,5-tetrahydropyridine-2,6-dicarboxylate N-succinyltransferase (285 aa).

The substrate site is built by arginine 111 and aspartate 148.

The protein belongs to the transferase hexapeptide repeat family. Homotrimer.

It localises to the cytoplasm. It carries out the reaction (S)-2,3,4,5-tetrahydrodipicolinate + succinyl-CoA + H2O = (S)-2-succinylamino-6-oxoheptanedioate + CoA. Its pathway is amino-acid biosynthesis; L-lysine biosynthesis via DAP pathway; LL-2,6-diaminopimelate from (S)-tetrahydrodipicolinate (succinylase route): step 1/3. This is 2,3,4,5-tetrahydropyridine-2,6-dicarboxylate N-succinyltransferase from Sinorhizobium medicae (strain WSM419) (Ensifer medicae).